A 160-amino-acid chain; its full sequence is Transcription elongation factor GreA (160 aa).

The stretch at 49 to 75 (SEYDEAKNDQAFTEGKILQLENKLKNA) forms a coiled coil.

Belongs to the GreA/GreB family.

In terms of biological role, necessary for efficient RNA polymerase transcription elongation past template-encoded arresting sites. The arresting sites in DNA have the property of trapping a certain fraction of elongating RNA polymerases that pass through, resulting in locked ternary complexes. Cleavage of the nascent transcript by cleavage factors such as GreA or GreB allows the resumption of elongation from the new 3'terminus. GreA releases sequences of 2 to 3 nucleotides. In Clostridium botulinum (strain Alaska E43 / Type E3), this protein is Transcription elongation factor GreA.